Reading from the N-terminus, the 561-residue chain is Phosphatidylinositol 4-kinase gamma 1 (561 aa).

The 296-residue stretch at 121–416 (GAQPLLLPSG…SVFGKTSEDS (296 aa)) folds into the PI3K/PI4K catalytic domain. Residues 127-133 (LPSGMGG) form a G-loop region. ATP-binding positions include 128–134 (PSGMGGA), lysine 149, and 233–236 (QRFV). Residues 266–274 (LNLDRHAGN) form a catalytic loop region. The activation loop stretch occupies residues 296–322 (PIDHGLCLPECLDDPYFEWLNWPQALV). Aspartate 298 contributes to the ATP binding site. The disordered stretch occupies residues 456–520 (PPLVPRGPRA…PISPNHDESK (65 aa)). Residues 467–484 (TIPNDVTASMSSSQNQRI) show a composition bias toward polar residues.

It belongs to the PI3/PI4-kinase family. Type II PI4K subfamily.

It catalyses the reaction a 1,2-diacyl-sn-glycero-3-phospho-(1D-myo-inositol) + ATP = a 1,2-diacyl-sn-glycero-3-phospho-(1D-myo-inositol 4-phosphate) + ADP + H(+). In terms of biological role, the phosphorylation of phosphatidylinositol (PI) to PI4P is the first committed step in the generation of phosphatidylinositol 4,5-bisphosphate (PIP2), a precursor of the second messenger inositol 1,4,5-trisphosphate (InsP3). The sequence is that of Phosphatidylinositol 4-kinase gamma 1 (PI4KG1) from Arabidopsis thaliana (Mouse-ear cress).